A 194-amino-acid chain; its full sequence is dCTP deaminase (194 aa).

DCTP contacts are provided by residues 110 to 115, aspartate 128, 136 to 138, tyrosine 171, lysine 178, and glutamine 182; these read RSSLAR and VLE. The active-site Proton donor/acceptor is the glutamate 138.

The protein belongs to the dCTP deaminase family. As to quaternary structure, homotrimer.

It carries out the reaction dCTP + H2O + H(+) = dUTP + NH4(+). Its pathway is pyrimidine metabolism; dUMP biosynthesis; dUMP from dCTP (dUTP route): step 1/2. Its function is as follows. Catalyzes the deamination of dCTP to dUTP. The protein is dCTP deaminase of Psychromonas ingrahamii (strain DSM 17664 / CCUG 51855 / 37).